The sequence spans 233 residues: MKIDVLTIFPGMFKGPLTESLIGKAIEKEILKINIIDIRSFSKDKHKKVDDKSFGGGCGMVMKLEPLYDAIKSTGVKKKNSTYKNPYTKPYVIYMSPQGRILSDSIVKNLAKFKQLVIICGHYEGVDERTMNYVDEEISIGDYILTGGEIPAMVLIDSTARMLTGVVKEKSSVKNDSFYNNLLDYPHYTRPAVFKGYKIPEVLLSGDHKKISEWRVQESYKRTKERRPDLLKK.

S-adenosyl-L-methionine is bound by residues Gly121 and 140-145 (IGDYIL).

Belongs to the RNA methyltransferase TrmD family. Homodimer.

It is found in the cytoplasm. It carries out the reaction guanosine(37) in tRNA + S-adenosyl-L-methionine = N(1)-methylguanosine(37) in tRNA + S-adenosyl-L-homocysteine + H(+). Its function is as follows. Specifically methylates guanosine-37 in various tRNAs. The polypeptide is tRNA (guanine-N(1)-)-methyltransferase (Endomicrobium trichonymphae).